We begin with the raw amino-acid sequence, 540 residues long: MSFQITDIPRILPELMLLLLGLLVLGSDVLTRWGRGPAAQLERAREAGQLTAVGLGLVFIVGLVQSRFLFTVPDPAGGPLDVLLTLGRNLQTGGPGGSPILGAFATDEFTMIARLTFIGAAFLTTLLAMGYRLTANPGEFYALLIFSTLGMSIMAAATEFILAYLALELSSLSLYVLAGYFRESERSPEAGLKYFLFGSLSSAIFLYGISLTYGFVASENQKAGGAPIIATLFSEVGRFATGDAAGSPLLILGMLFIIAGLGYKISVVPFHTWAPDVYQGAPPPVTAFLSTASKAAGFLLLYRLLTTAFPGAVGAPRLEEFNGWTSILAILALVTVIVGNLAALPQTNARRLLAYSSIGHAGFLLLAVLLWASASPVDRTFGTAALIYYLIVYSLTNLGSFGVLAVLTNALGSDDLSAMQGLWRRNMSLTLMMTILILSLAGIPPLAGFWAKFFVFMAGYQAGAVPLVTIAVIMTVVSLYYYLRFLKAMWILPAPAITPFKTPPVANAAIILSTVLVVLLGLLPNLIWGTISSAASVAAR.

The next 13 helical transmembrane spans lie at 11–31, 52–72, 109–129, 142–162, 195–215, 250–270, 284–306, 324–344, 352–372, 386–406, 431–451, 464–486, and 508–528; these read ILPELMLLLLGLLVLGSDVLT, AVGLGLVFIVGLVQSRFLFTV, FTMIARLTFIGAAFLTTLLAM, ALLIFSTLGMSIMAAATEFIL, FLFGSLSSAIFLYGISLTYGF, LILGMLFIIAGLGYKISVVPF, PVTAFLSTASKAAGFLLLYRLLT, WTSILAILALVTVIVGNLAAL, LLAYSSIGHAGFLLLAVLLWA, LIYYLIVYSLTNLGSFGVLAV, LMMTILILSLAGIPPLAGFWA, AVPLVTIAVIMTVVSLYYYLRFL, and AAIILSTVLVVLLGLLPNLIW.

The protein belongs to the complex I subunit 2 family. As to quaternary structure, NDH-1 is composed of 14 different subunits. Subunits NuoA, H, J, K, L, M, N constitute the membrane sector of the complex.

It is found in the cell membrane. It carries out the reaction a quinone + NADH + 5 H(+)(in) = a quinol + NAD(+) + 4 H(+)(out). Functionally, NDH-1 shuttles electrons from NADH, via FMN and iron-sulfur (Fe-S) centers, to quinones in the respiratory chain. The immediate electron acceptor for the enzyme in this species is believed to be ubiquinone. Couples the redox reaction to proton translocation (for every two electrons transferred, four hydrogen ions are translocated across the cytoplasmic membrane), and thus conserves the redox energy in a proton gradient. This Roseiflexus castenholzii (strain DSM 13941 / HLO8) protein is NADH-quinone oxidoreductase subunit N 1.